We begin with the raw amino-acid sequence, 363 residues long: MKTRVTRLTVAAPNDVSALAQAIESGEVDPTRVIAVLGKTEGNGCVNDFTRAFATSTLKRFFAERLALNETEVDERIAFVMSGGTEGGLSPHWLVFEVDDSAPSRDTTTPGLAAGVAFTRDLRPEEIGRTSQVELTRDAVLRAMAAAGIQRVEDVHFVQIKCPLLTAARINEAAARGQSVACHDTYESMGYSRGASALGVAAALGDLPGDVRDEQICREWSLYSSRASSSAGIELLRNEVLVLGNAPGWDPEYRIGHAVMEDALDAQAIERALASVPGGDKIKLTPERLAGLLVKAEPSASGSIRGNRHVMSDDSDINGSRHARALVGGVLAGQLGDTRLFVSGGAEHQGPNGGGPLALIVRS.

An RU A region spans residues 1–103 (MKTRVTRLTV…LVFEVDDSAP (103 aa)). Substrate is bound by residues Arg51 and 82–83 (SG). Residues 111–247 (GLAAGVAFTR…NEVLVLGNAP (137 aa)) form an RU B region. Lys161 is a catalytic residue. Residues Arg193 and 230–231 (SA) contribute to the substrate site. Catalysis depends on Ser230, which acts as the Nucleophile. Residues 253 to 363 (YRIGHAVMED…GGPLALIVRS (111 aa)) are RU C. Glu297 lines the Mg(2+) pocket. Residues Arg324 and 343 to 344 (SG) each bind substrate. Residues Ala346, Gln349, Gly350, Pro351, and Gly354 each contribute to the Mg(2+) site.

This sequence belongs to the cyclic amide hydrolase (CyAH) family. In terms of assembly, homotetramer.

The enzyme catalyses cyanurate + H2O = 1-carboxybiuret + H(+). Its pathway is xenobiotic degradation; atrazine degradation; biuret from cyanurate: step 1/1. With respect to regulation, inhibited by barbituric acid. Responsible for the hydrolysis of cyanuric acid, an intermediate formed during catabolism of s-triazine based compounds in herbicides such as atrazine and polymers such as melamine. Catalyzes the hydrolytic opening of the s-triazine ring of cyanuric acid (2,4,6-trihydroxy-s-triazine) to yield carbon dioxide and carboxybiuret, which spontaneously decarboxylates to biuret. This Ectopseudomonas oleovorans (strain CECT 5344) (Pseudomonas pseudoalcaligenes) protein is Cyanuric acid amidohydrolase.